We begin with the raw amino-acid sequence, 348 residues long: 3-methyl-2-oxobutanoate dehydrogenase subunit beta (348 aa).

Thiamine diphosphate contacts are provided by residues E51, L80–E82, Q104, and F108–P111. Residues F105–F108 and H151 each bind substrate. H151 serves as the catalytic Proton acceptor.

As to quaternary structure, heteromer of E1 alpha (BkdA) and beta (BkdB) subunits. Part of the BCKADH complex, consisting of multiple copies of BkdA/BkdB (E1), BkdC (E2) and Lpd (E3). Requires thiamine diphosphate as cofactor.

The catalysed reaction is N(6)-[(R)-lipoyl]-L-lysyl-[protein] + 3-methyl-2-oxobutanoate + H(+) = N(6)-[(R)-S(8)-2-methylpropanoyldihydrolipoyl]-L-lysyl-[protein] + CO2. Component of the branched-chain alpha-ketoacid dehydrogenase (BCKADH) complex, that catalyzes the overall conversion of branched-chain alpha-ketoacids to acyl-CoA and CO(2). The chain is 3-methyl-2-oxobutanoate dehydrogenase subunit beta (bkdB) from Mycobacterium tuberculosis (strain CDC 1551 / Oshkosh).